The sequence spans 608 residues: AAA ATPase forming ring-shaped complexes (608 aa).

Positions 45–79 (AQEYDAVLRRLSAAEATRDNMSRQIRGAGEKNRKL) form a coiled coil. 302 to 307 (GNGKTM) lines the ATP pocket.

It belongs to the AAA ATPase family. Homohexamer. Assembles into a hexameric ring structure.

This chain is AAA ATPase forming ring-shaped complexes, found in Rothia mucilaginosa (strain DY-18) (Stomatococcus mucilaginosus).